The chain runs to 336 residues: Cyclin-H1-1 (336 aa).

Ala2 is modified (N-acetylalanine). The disordered stretch occupies residues Lys297 to Gly336. Over residues Arg312–Arg322 the composition is skewed to basic residues.

The protein belongs to the cyclin family. In terms of assembly, interacts with CDKA-1, CDKD-2 and CDKD-3, but not CDKD-1 and CDKF-1.

It localises to the cytoplasm. It is found in the nucleus. Its function is as follows. Associates with CDK-2 and CDK-3 and activates the CDK kinases. In Arabidopsis thaliana (Mouse-ear cress), this protein is Cyclin-H1-1 (CYCH1-1).